The sequence spans 558 residues: MAGPLPPLNQEAAFQKLQEYYDSKGKDLNIKDLFVKDSKRFSKYSLRLHTQNDGEILLDYSKNRINDEVWDLLLTLAKVRRVNAARDAMFSGQHINITENRAVLHTALRNRGTDPVLVDDKDVMPDVRAELAHMKEFTNMVISGVWRGCTGKQITDVVNIGIGGSDLGPLMVTEALKPYGKGLHSHFVSNIDGTHLAEVLKKVNYETTLFIVASKTFTTQETITNATSAKTWLLEHSKEPESVAKHFVALSTNKEKVTEFGIDSTNMFGFWDWVGGRYSLWSAIGLSICLSIGFENFEQLLDGAHFMDNHFKTTPFEKNAPVILALLGVWYSNFFKAETHALLPYDQYLHRFAAYFQQGDMESNGKFVSKSGKPVKYSTGPIVWGEPGTNGQHAFYQLIHQGTRLIPCDFIAPAQTHNPIAGGKHHKILLSNFLAQTEALMAGKTVDEARTELSKAGLCGNELDNLLPHKVFVGNRPTNSIVVKKVSPFTLGALIALYEHKIFVQGIIWDINSFDQWGVELGKQLAKAIEPELDHCNEVSTHDSSTNGLINFIKANWK.

Glu-362 (proton donor) is an active-site residue. Residues His-393 and Lys-523 contribute to the active site.

Belongs to the GPI family.

The protein resides in the cytoplasm. The enzyme catalyses alpha-D-glucose 6-phosphate = beta-D-fructose 6-phosphate. Its pathway is carbohydrate degradation; glycolysis; D-glyceraldehyde 3-phosphate and glycerone phosphate from D-glucose: step 2/4. The protein is Glucose-6-phosphate isomerase (Pgi) of Drosophila melanogaster (Fruit fly).